A 553-amino-acid polypeptide reads, in one-letter code: Dihydroxy-acid dehydratase (553 aa).

Residue aspartate 78 participates in Mg(2+) binding. Position 119 (cysteine 119) interacts with [2Fe-2S] cluster. Residues aspartate 120 and lysine 121 each contribute to the Mg(2+) site. At lysine 121 the chain carries N6-carboxylysine. Cysteine 193 lines the [2Fe-2S] cluster pocket. Glutamate 441 contributes to the Mg(2+) binding site. The Proton acceptor role is filled by serine 467.

This sequence belongs to the IlvD/Edd family. In terms of assembly, homodimer. It depends on [2Fe-2S] cluster as a cofactor. Mg(2+) is required as a cofactor.

The catalysed reaction is (2R)-2,3-dihydroxy-3-methylbutanoate = 3-methyl-2-oxobutanoate + H2O. It catalyses the reaction (2R,3R)-2,3-dihydroxy-3-methylpentanoate = (S)-3-methyl-2-oxopentanoate + H2O. It functions in the pathway amino-acid biosynthesis; L-isoleucine biosynthesis; L-isoleucine from 2-oxobutanoate: step 3/4. Its pathway is amino-acid biosynthesis; L-valine biosynthesis; L-valine from pyruvate: step 3/4. Functionally, functions in the biosynthesis of branched-chain amino acids. Catalyzes the dehydration of (2R,3R)-2,3-dihydroxy-3-methylpentanoate (2,3-dihydroxy-3-methylvalerate) into 2-oxo-3-methylpentanoate (2-oxo-3-methylvalerate) and of (2R)-2,3-dihydroxy-3-methylbutanoate (2,3-dihydroxyisovalerate) into 2-oxo-3-methylbutanoate (2-oxoisovalerate), the penultimate precursor to L-isoleucine and L-valine, respectively. In Geobacter sulfurreducens (strain ATCC 51573 / DSM 12127 / PCA), this protein is Dihydroxy-acid dehydratase.